Reading from the N-terminus, the 432-residue chain is Trigger factor (432 aa).

Residues glutamate 161–proline 246 enclose the PPIase FKBP-type domain.

This sequence belongs to the FKBP-type PPIase family. Tig subfamily.

Its subcellular location is the cytoplasm. The enzyme catalyses [protein]-peptidylproline (omega=180) = [protein]-peptidylproline (omega=0). Functionally, involved in protein export. Acts as a chaperone by maintaining the newly synthesized protein in an open conformation. Functions as a peptidyl-prolyl cis-trans isomerase. In Klebsiella pneumoniae subsp. pneumoniae (strain ATCC 700721 / MGH 78578), this protein is Trigger factor.